Consider the following 284-residue polypeptide: Undecaprenyl-diphosphatase (284 aa).

Helical transmembrane passes span 7–27 (IILGVIEGITEWLPISSTGHL), 44–64 (EMFDVVIQLGAILSVVVLYFH), 90–110 (LWLKVLIAALPAAIIGLPLND), 116–136 (FYHFVPVAFMLIIYGVAFIVI), 167–187 (VLSLLPGTSRSGATIVGALLV), 197–217 (FTFFLGIPVMFGASFIKILHF), 229–249 (FGVLLVACIVAFGVSMVAIKF), and 259–279 (FTFFGKYRIVLGIILLIYAMF).

It belongs to the UppP family.

Its subcellular location is the cell membrane. The enzyme catalyses di-trans,octa-cis-undecaprenyl diphosphate + H2O = di-trans,octa-cis-undecaprenyl phosphate + phosphate + H(+). Catalyzes the dephosphorylation of undecaprenyl diphosphate (UPP). Confers resistance to bacitracin. The chain is Undecaprenyl-diphosphatase from Lactococcus lactis subsp. lactis (strain IL1403) (Streptococcus lactis).